The chain runs to 295 residues: Glucose-1-phosphate thymidylyltransferase (295 aa).

Mg(2+) contacts are provided by aspartate 111 and aspartate 226.

Belongs to the glucose-1-phosphate thymidylyltransferase family. Homotetramer. The cofactor is Mg(2+).

The catalysed reaction is dTTP + alpha-D-glucose 1-phosphate + H(+) = dTDP-alpha-D-glucose + diphosphate. Its pathway is carbohydrate biosynthesis; dTDP-L-rhamnose biosynthesis. It participates in bacterial outer membrane biogenesis; LPS O-antigen biosynthesis. Functionally, catalyzes the formation of dTDP-glucose, from dTTP and glucose 1-phosphate, as well as its pyrophosphorolysis. The protein is Glucose-1-phosphate thymidylyltransferase (rmlA) of Xanthomonas campestris pv. campestris (strain B100).